The following is a 420-amino-acid chain: UDP-N-acetyl-D-mannosamine dehydrogenase (420 aa).

Y13, I14, D33, T85, and T126 together coordinate NAD(+). The UDP-N-acetyl-alpha-D-mannosaminouronate site is built by R160, V161, K212, N216, R219, H250, R252, and G263. The Proton donor/acceptor role is filled by K212. The Nucleophile role is filled by C266. The UDP-N-acetyl-alpha-D-mannosaminouronate site is built by F330 and K331. R338 is an NAD(+) binding site. K416 contributes to the UDP-N-acetyl-alpha-D-mannosaminouronate binding site.

The protein belongs to the UDP-glucose/GDP-mannose dehydrogenase family. WecC subfamily. As to quaternary structure, homodimer.

It catalyses the reaction UDP-N-acetyl-alpha-D-mannosamine + 2 NAD(+) + H2O = UDP-N-acetyl-alpha-D-mannosaminouronate + 2 NADH + 3 H(+). The protein operates within bacterial outer membrane biogenesis; enterobacterial common antigen biosynthesis. Functionally, catalyzes the four-electron oxidation of UDP-N-acetyl-D-mannosamine (UDP-ManNAc), reducing NAD(+) and releasing UDP-N-acetylmannosaminuronic acid (UDP-ManNAcA). In Yersinia pestis, this protein is UDP-N-acetyl-D-mannosamine dehydrogenase.